The primary structure comprises 56 residues: Large ribosomal subunit protein bL32 (56 aa).

Over residues 1–16 (MAVQKSKKSRSMRGMR) the composition is skewed to basic residues. Residues 1–33 (MAVQKSKKSRSMRGMRRSHDALTTSAVSVDATS) form a disordered region. The segment covering 21 to 33 (ALTTSAVSVDATS) has biased composition (polar residues).

It belongs to the bacterial ribosomal protein bL32 family.

The protein is Large ribosomal subunit protein bL32 of Aliivibrio fischeri (strain ATCC 700601 / ES114) (Vibrio fischeri).